The following is a 3411-amino-acid chain: Genome polyprotein (3411 aa).

Topologically, residues 1 to 104 (MSGRKAQGKT…LSSRKRRSHD (104 aa)) are cytoplasmic. Residues 38–72 (PGPSRGVQGFIFFFLFNILTGKKITAHLKRLWKML) form a hydrophobic; homodimerization of capsid protein C region. The propeptide at 102–121 (SHDVLTVQFLILGMLLMTGG) is ER anchor for the capsid protein C, removed in mature form by serine protease NS3. Residues 105–125 (VLTVQFLILGMLLMTGGVTLV) traverse the membrane as a helical segment. Over 126-244 (RKNRWLLLNV…GERQLQKIER (119 aa)) the chain is Extracellular. N134 and N150 each carry an N-linked (GlcNAc...) asparagine; by host glycan. Residues 245–265 (WFVRNPFFAVTALTIAYLVGS) traverse the membrane as a helical segment. Topologically, residues 266-270 (NMTQR) are cytoplasmic. Residues 271–285 (VVIALLVLAVGPAYS) form a helical membrane-spanning segment. Residues 286 to 730 (AHCIGITDRD…TVFGSAFQGL (445 aa)) lie on the Extracellular side of the membrane. Disulfide bonds link C288–C315, C345–C401, C345–C406, C359–C390, C377–C401, C377–C406, C467–C568, and C585–C615. Residues 383–396 (DRGWGNGCGLFGKG) are fusion peptide. The chain crosses the membrane as a helical span at residues 731–751 (FGGLNWITKVIMGAVLIWVGI). Topologically, residues 752-757 (NTRNMT) are extracellular. Residues 758–778 (MSMSMILVGVIMMFLSLGVGA) traverse the membrane as a helical segment. At 779–1132 (DQGCAINFGK…LVRSWVTAGE (354 aa)) the chain is on the extracellular side. Intrachain disulfides connect C782/C793, C833/C921, C957/C1002, C1058/C1107, C1069/C1091, and C1090/C1094. Residues N908 and N986 are each glycosylated (N-linked (GlcNAc...) asparagine; by host). Residues 1133–1153 (IHAVPFGLVSMMIAMEVVLRK) traverse the membrane as a helical segment. The Cytoplasmic segment spans residues 1154-1201 (RQGPKQMLVGGVVLLGAMLVGQVTLLDLLKLTVAVGLHFHEMNNGGDA). The helical transmembrane segment at 1202 to 1222 (MYMALIAAFSIRPGLLIGFGL) threads the bilayer. Residues 1223-1287 (RTLWSPRERL…ILPLMALLTP (65 aa)) are Lumenal-facing. The helical transmembrane segment at 1288 to 1308 (VTMAEVRLAAMFFCAVVIIGV) threads the bilayer. Residues 1309-1355 (LHQNFKDTSMQKTIPLVALTLTSYLGLTQPFLGLCAFLATRIFGRRS) are Cytoplasmic-facing. A helical transmembrane segment spans residues 1356–1376 (IPVNEALAAAGLVGVLAGLAF). The Lumenal segment spans residues 1377–1378 (QE). Residues 1379 to 1399 (MENFLGPIAVGGLLMMLVSVA) form a helical membrane-spanning segment. Residues 1400 to 1456 (GRVDGLELKKLGEVSWEEEAEISGSSARYDVALSEQGEFKLLSEEKVPWDQVVMTSL) are Cytoplasmic-facing. Positions 1407-1446 (LKKLGEVSWEEEAEISGSSARYDVALSEQGEFKLLSEEKV) are interacts with and activates NS3 protease. Residues 1457–1477 (ALVGAALHPFALLLVLAGWLF) constitute an intramembrane region (helical). Residues 1478 to 2157 (HVRGARRSGD…RNALSMMPEA (680 aa)) are Cytoplasmic-facing. Residues 1485-1665 (SGDVLWDIPT…EVKEEGKEEL (181 aa)) form the Peptidase S7 domain. Catalysis depends on charge relay system; for serine protease NS3 activity residues H1537, D1561, and S1622. In terms of domain architecture, Helicase ATP-binding spans 1669–1825 (PTMLKKGMTT…HSNGEIEDVQ (157 aa)). The interval 1673–1676 (KKGM) is important for RNA-binding. 1682–1689 (FHPGAGKT) contacts ATP. Residues 1773 to 1776 (DEAH) carry the DEAH box motif. The Helicase C-terminal domain maps to 1820-1997 (EIEDVQTDIP…VRGGMVAPLY (178 aa)). The residue at position 1877 (K1877) is an N6-acetyllysine; by host. Residues 2158–2178 (MTIVMLFILAGLLTSGMVIFF) traverse the membrane as a helical segment. Residues 2179 to 2186 (MSPKGISR) are Lumenal-facing. The helical intramembrane region spans 2187–2207 (MSMAMGTMAGCGYLMFLGGVK). The Lumenal portion of the chain corresponds to 2208–2209 (PT). A helical membrane pass occupies residues 2210 to 2230 (HISYVMLIFFVLMVVVIPEPG). Over 2231–2241 (QQRSIQDNQVA) the chain is Cytoplasmic. The helical transmembrane segment at 2242 to 2262 (YLIIGILTLVSAVAANELGML) threads the bilayer. Residues 2263 to 2293 (EKTKEDLFGKKNLIPSSASPWSWPDLDLKPG) are Lumenal-facing. The segment at residues 2294-2314 (AAWTVYVGIVTMLSPMLHHWI) is an intramembrane region (helical). The Lumenal segment spans residues 2315–2360 (KVEYGNLSLSGIAQSASVLSFMDKGIPFMKMNISVIMLLVSGWNSI). A helical membrane pass occupies residues 2361–2381 (TVMPLLCGIGCAMLHWSLILP). The Cytoplasmic segment spans residues 2382 to 2421 (GIKAQQSKLAQRRVFHGVAENPVVDGNPTVDIEEAPEMPA). The helical transmembrane segment at 2422 to 2442 (LYEKKLALYLLLALSLASVAM) threads the bilayer. Residues 2443–2445 (CRT) lie on the Lumenal side of the membrane. The chain crosses the membrane as a helical span at residues 2446 to 2466 (PFSLAEGIVLASAALGPLIEG). Topologically, residues 2467-3411 (NTSLLWNGPM…DADLQLGELI (945 aa)) are cytoplasmic. The mRNA cap 0-1 NS5-type MT domain occupies 2507-2771 (GSANGKTLGE…DVILPIGTRS (265 aa)). S2562 is an S-adenosyl-L-methionine binding site. S2562 carries the phosphoserine modification. K2567 (for 2'-O-MTase activity) is an active-site residue. S-adenosyl-L-methionine contacts are provided by G2592, W2593, T2610, L2611, D2637, and I2638. D2652 serves as the catalytic For 2'-O-MTase activity. Position 2653 (I2653) interacts with S-adenosyl-L-methionine. Residues K2688 and E2724 each act as for 2'-O-MTase activity in the active site. Residue Y2726 participates in S-adenosyl-L-methionine binding. A Nuclear localization signal motif is present at residues 2878-2911 (RKIMKVVNRWLFRHLAREKNPRLCTKEEFIAKVR). Residues E2945, H2949, C2954, and C2957 each coordinate Zn(2+). A RdRp catalytic domain is found at 3035 to 3187 (GGFYADDTAG…RPIDDRFGLA (153 aa)). 3 residues coordinate Zn(2+): H3222, C3238, and C3357.

It in the N-terminal section; belongs to the class I-like SAM-binding methyltransferase superfamily. mRNA cap 0-1 NS5-type methyltransferase family. As to quaternary structure, homodimer. Interacts (via N-terminus) with host EXOC1 (via C-terminus); this interaction results in EXOC1 degradation through the proteasome degradation pathway. Forms heterodimers with envelope protein E in the endoplasmic reticulum and Golgi. In terms of assembly, homodimer; in the endoplasmic reticulum and Golgi. Interacts with protein prM. Interacts with non-structural protein 1. As to quaternary structure, homodimer; Homohexamer when secreted. Interacts with envelope protein E. Interacts (via N-terminus) with serine protease NS3. In terms of assembly, forms a heterodimer with serine protease NS3. May form homooligomers. As to quaternary structure, forms a heterodimer with NS2B. Interacts with non-structural protein 2A (via N-terminus). Interacts with NS4B. Interacts with unphosphorylated RNA-directed RNA polymerase NS5; this interaction stimulates RNA-directed RNA polymerase NS5 guanylyltransferase activity. NS3 interacts with host PDCD6IP; this interaction contributes to virion release. Interacts with serine protease NS3. In terms of assembly, homodimer. Interacts with host STAT2; this interaction prevents the establishment of cellular antiviral state. Interacts with serine protease NS3. Interacts with host TRIM23; this interaction leads to NS5 ubiquitination. Post-translationally, specific enzymatic cleavages in vivo yield mature proteins. The nascent capsid protein C contains a C-terminal hydrophobic domain that act as a signal sequence for translocation of prM into the lumen of the ER. Mature capsid protein C is cleaved at a site upstream of this hydrophobic domain by NS3. prM is cleaved in post-Golgi vesicles by a host furin, releasing the mature small envelope protein M, and peptide pr. Non-structural protein 2A-alpha, a C-terminally truncated form of non-structural protein 2A, results from partial cleavage by NS3. Specific enzymatic cleavages in vivo yield mature proteins peptide 2K acts as a signal sequence and is removed from the N-terminus of NS4B by the host signal peptidase in the ER lumen. Signal cleavage at the 2K-4B site requires a prior NS3 protease-mediated cleavage at the 4A-2K site. In terms of processing, cleaved in post-Golgi vesicles by a host furin, releasing the mature small envelope protein M, and peptide pr. This cleavage is incomplete as up to 30% of viral particles still carry uncleaved prM. N-glycosylated. Post-translationally, N-glycosylated. The excreted form is glycosylated and this is required for efficient secretion of the protein from infected cells. In terms of processing, polyubiquitinated; ubiquitination is probably mediated by host TRIM23 and is prerequisite for NS5-STAT2 interaction. NS5 is not ISGylated or sumoylated. Acetylated by host KAT5. Acetylation modulates NS3 RNA-binding and unwinding activities and plays an important positive role for viral replication. Post-translationally, phosphorylated on serines residues. This phosphorylation may trigger NS5 nuclear localization.

It is found in the virion. Its subcellular location is the host nucleus. The protein resides in the host cytoplasm. It localises to the host perinuclear region. The protein localises to the secreted. It is found in the virion membrane. Its subcellular location is the host endoplasmic reticulum membrane. It carries out the reaction Selective hydrolysis of -Xaa-Xaa-|-Yaa- bonds in which each of the Xaa can be either Arg or Lys and Yaa can be either Ser or Ala.. The enzyme catalyses RNA(n) + a ribonucleoside 5'-triphosphate = RNA(n+1) + diphosphate. The catalysed reaction is a ribonucleoside 5'-triphosphate + H2O = a ribonucleoside 5'-diphosphate + phosphate + H(+). It catalyses the reaction ATP + H2O = ADP + phosphate + H(+). It carries out the reaction a 5'-end (5'-triphosphoguanosine)-ribonucleoside in mRNA + S-adenosyl-L-methionine = a 5'-end (N(7)-methyl 5'-triphosphoguanosine)-ribonucleoside in mRNA + S-adenosyl-L-homocysteine. The enzyme catalyses a 5'-end (N(7)-methyl 5'-triphosphoguanosine)-ribonucleoside in mRNA + S-adenosyl-L-methionine = a 5'-end (N(7)-methyl 5'-triphosphoguanosine)-(2'-O-methyl-ribonucleoside) in mRNA + S-adenosyl-L-homocysteine + H(+). Plays a role in virus budding by binding to the cell membrane and gathering the viral RNA into a nucleocapsid that forms the core of a mature virus particle. During virus entry, may induce genome penetration into the host cytoplasm after hemifusion induced by the surface proteins. Can migrate to the cell nucleus where it modulates host functions. Functionally, inhibits RNA silencing by interfering with host Dicer. Its function is as follows. Prevents premature fusion activity of envelope proteins in trans-Golgi by binding to envelope protein E at pH6.0. After virion release in extracellular space, gets dissociated from E dimers. In terms of biological role, acts as a chaperone for envelope protein E during intracellular virion assembly by masking and inactivating envelope protein E fusion peptide. prM is the only viral peptide matured by host furin in the trans-Golgi network probably to avoid catastrophic activation of the viral fusion activity in acidic Golgi compartment prior to virion release. prM-E cleavage is inefficient, and many virions are only partially matured. These uncleaved prM would play a role in immune evasion. May play a role in virus budding. Exerts cytotoxic effects by activating a mitochondrial apoptotic pathway through M ectodomain. May display a viroporin activity. Functionally, binds to host cell surface receptor and mediates fusion between viral and cellular membranes. Envelope protein is synthesized in the endoplasmic reticulum in the form of heterodimer with protein prM. They play a role in virion budding in the ER, and the newly formed immature particle is covered with 60 spikes composed of heterodimer between precursor prM and envelope protein E. The virion is transported to the Golgi apparatus where the low pH causes dissociation of PrM-E heterodimers and formation of E homodimers. prM-E cleavage is inefficient, and many virions are only partially matured. These uncleaved prM would play a role in immune evasion. Its function is as follows. Involved in immune evasion, pathogenesis and viral replication. Once cleaved off the polyprotein, is targeted to three destinations: the viral replication cycle, the plasma membrane and the extracellular compartment. Essential for viral replication. Required for formation of the replication complex and recruitment of other non-structural proteins to the ER-derived membrane structures. Excreted as a hexameric lipoparticle that plays a role against host immune response. Antagonizing the complement function. Binds to the host macrophages and dendritic cells. Inhibits signal transduction originating from Toll-like receptor 3 (TLR3). In terms of biological role, component of the viral RNA replication complex that functions in virion assembly and antagonizes the host immune response. Required cofactor for the serine protease function of NS3. May have membrane-destabilizing activity and form viroporins. Functionally, displays three enzymatic activities: serine protease, NTPase and RNA helicase. NS3 serine protease, in association with NS2B, performs its autocleavage and cleaves the polyprotein at dibasic sites in the cytoplasm: C-prM, NS2A-NS2B, NS2B-NS3, NS3-NS4A, NS4A-2K and NS4B-NS5. NS3 RNA helicase binds RNA and unwinds dsRNA in the 3' to 5' direction. Also plays a role in virus assembly. Its function is as follows. Regulates the ATPase activity of the NS3 helicase activity. NS4A allows NS3 helicase to conserve energy during unwinding. In terms of biological role, functions as a signal peptide for NS4B and is required for the interferon antagonism activity of the latter. Induces the formation of ER-derived membrane vesicles where the viral replication takes place. Inhibits interferon (IFN)-induced host STAT1 phosphorylation and nuclear translocation, thereby preventing the establishment of cellular antiviral state by blocking the IFN-alpha/beta pathway. Functionally, replicates the viral (+) and (-) RNA genome, and performs the capping of genomes in the cytoplasm. NS5 methylates viral RNA cap at guanine N-7 and ribose 2'-O positions. Besides its role in RNA genome replication, also prevents the establishment of cellular antiviral state by blocking the interferon-alpha/beta (IFN-alpha/beta) signaling pathway. IFN-I induces binding of NS5 to host IFN-activated transcription factor STAT2, preventing its transcriptional activity. Host TRIM23 is the E3 ligase that interacts with and polyubiquitinates NS5 to promote its binding to STAT2 and trigger IFN-I signaling inhibition. This chain is Genome polyprotein, found in Aedes aegypti (Yellowfever mosquito).